Reading from the N-terminus, the 175-residue chain is MAKPERNKKPQQAEERDDGMREKMVAVNRVTKVVKGGRILGFAALTVVGDGDGSIGMGKGKSREVPVAVQKAMEEARRKMAKVSLKSGTVHHTVMGRHGATTVMIQPAPEGTGIIAGGAMRAVFEVVGVTNVVAKAHGSTNPYNIVRATIDGLSKVNTPAEIAAKRGLSVDQIQG.

The tract at residues 1–21 (MAKPERNKKPQQAEERDDGMR) is disordered. Positions 20-83 (MREKMVAVNR…EEARRKMAKV (64 aa)) constitute an S5 DRBM domain.

It belongs to the universal ribosomal protein uS5 family. In terms of assembly, part of the 30S ribosomal subunit. Contacts proteins S4 and S8.

Functionally, with S4 and S12 plays an important role in translational accuracy. In terms of biological role, located at the back of the 30S subunit body where it stabilizes the conformation of the head with respect to the body. This chain is Small ribosomal subunit protein uS5, found in Dechloromonas aromatica (strain RCB).